The primary structure comprises 255 residues: Electron transfer flavoprotein subunit beta (255 aa).

Residue Ala-2 is modified to N-acetylalanine. AMP is bound by residues Ala-9, Asn-39–Cys-42, Cys-66, and Gly-123–Thr-134. Residues Ala-183–Lys-205 form a recognition loop region. Lys-200 is modified (N6,N6,N6-trimethyllysine; by ETFBKMT; alternate). Lys-200 is subject to N6-acetyllysine; alternate. Lys-200 bears the N6-methyllysine; alternate mark. Lys-203 bears the N6,N6,N6-trimethyllysine; by ETFBKMT mark. An N6-acetyllysine; alternate modification is found at Lys-210. Lys-210 is subject to N6-succinyllysine; alternate. Residues Ser-223 and Ser-226 each carry the phosphoserine modification. The residue at position 238 (Lys-238) is an N6-acetyllysine. An N6-acetyllysine; alternate modification is found at Lys-248. Lys-248 is subject to N6-succinyllysine; alternate.

Belongs to the ETF beta-subunit/FixA family. As to quaternary structure, heterodimer composed of ETFA and ETFB. Identified in a complex that contains ETFA, ETFB and ETFRF1. Interacts with ACADM. Post-translationally, methylated. Trimethylation at Lys-200 and Lys-203 may negatively regulate the activity in electron transfer from acyl-CoA dehydrogenases.

The protein localises to the mitochondrion matrix. In terms of biological role, heterodimeric electron transfer flavoprotein that accepts electrons from several mitochondrial dehydrogenases, including acyl-CoA dehydrogenases, glutaryl-CoA and sarcosine dehydrogenase. It transfers the electrons to the main mitochondrial respiratory chain via ETF-ubiquinone oxidoreductase. Required for normal mitochondrial fatty acid oxidation and normal amino acid metabolism. ETFB binds an AMP molecule that probably has a purely structural role. The sequence is that of Electron transfer flavoprotein subunit beta from Pongo abelii (Sumatran orangutan).